The sequence spans 406 residues: ATPase ASNA1 homolog (406 aa).

21 to 28 (KGGVGKTT) lines the ATP pocket. Asp-62 is a catalytic residue. The ATP site is built by Glu-300 and Asn-327. Residues Cys-339 and Cys-342 each contribute to the Zn(2+) site.

Belongs to the arsA ATPase family. In terms of assembly, homodimer.

The protein localises to the cytoplasm. It is found in the endoplasmic reticulum. Functionally, ATPase required for the post-translational delivery of tail-anchored (TA) proteins to the endoplasmic reticulum. Recognizes and selectively binds the transmembrane domain of TA proteins in the cytosol. This complex then targets to the endoplasmic reticulum by membrane-bound receptors, where the tail-anchored protein is released for insertion. This process is regulated by ATP binding and hydrolysis. ATP binding drives the homodimer towards the closed dimer state, facilitating recognition of newly synthesized TA membrane proteins. ATP hydrolysis is required for insertion. Subsequently, the homodimer reverts towards the open dimer state, lowering its affinity for the membrane-bound receptor, and returning it to the cytosol to initiate a new round of targeting. This is ATPase ASNA1 homolog from Leishmania braziliensis.